Here is a 173-residue protein sequence, read N- to C-terminus: Nicotinamide-nucleotide adenylyltransferase (173 aa).

This sequence belongs to the archaeal NMN adenylyltransferase family.

The protein localises to the cytoplasm. The enzyme catalyses beta-nicotinamide D-ribonucleotide + ATP + H(+) = diphosphate + NAD(+). It functions in the pathway cofactor biosynthesis; NAD(+) biosynthesis; NAD(+) from nicotinamide D-ribonucleotide: step 1/1. The chain is Nicotinamide-nucleotide adenylyltransferase from Methanosarcina barkeri (strain Fusaro / DSM 804).